Consider the following 87-residue polypeptide: Probable Fe(2+)-trafficking protein (87 aa).

The protein belongs to the Fe(2+)-trafficking protein family. Monomer.

Its function is as follows. Could be a mediator in iron transactions between iron acquisition and iron-requiring processes, such as synthesis and/or repair of Fe-S clusters in biosynthetic enzymes. This is Probable Fe(2+)-trafficking protein from Buchnera aphidicola subsp. Baizongia pistaciae (strain Bp).